The sequence spans 311 residues: Aspartate carbamoyltransferase catalytic subunit (311 aa).

Positions 58 and 59 each coordinate carbamoyl phosphate. K86 is an L-aspartate binding site. Residues R108, H136, and Q139 each contribute to the carbamoyl phosphate site. Residues R169 and R224 each coordinate L-aspartate. Residues G265 and P266 each coordinate carbamoyl phosphate.

It belongs to the aspartate/ornithine carbamoyltransferase superfamily. ATCase family. Heterododecamer (2C3:3R2) of six catalytic PyrB chains organized as two trimers (C3), and six regulatory PyrI chains organized as three dimers (R2).

The catalysed reaction is carbamoyl phosphate + L-aspartate = N-carbamoyl-L-aspartate + phosphate + H(+). Its pathway is pyrimidine metabolism; UMP biosynthesis via de novo pathway; (S)-dihydroorotate from bicarbonate: step 2/3. Catalyzes the condensation of carbamoyl phosphate and aspartate to form carbamoyl aspartate and inorganic phosphate, the committed step in the de novo pyrimidine nucleotide biosynthesis pathway. The sequence is that of Aspartate carbamoyltransferase catalytic subunit from Geotalea uraniireducens (strain Rf4) (Geobacter uraniireducens).